Reading from the N-terminus, the 165-residue chain is uncharacterized protein (165 aa).

Residues 51-102 (KQAAVEPGARGGERPTGSQAGVTDTPDSAPFQRRSRAPRAREQAAQAGLNQK) are disordered. Polar residues predominate over residues 66-76 (TGSQAGVTDTP).

This is an uncharacterized protein from Mus musculus (Mouse).